A 66-amino-acid polypeptide reads, in one-letter code: Beta-toxin Chui3 (66 aa).

An LCN-type CS-alpha/beta domain is found at 1 to 66 (KEGYLVELGT…VWPLKNKTCR (66 aa)). 4 disulfide bridges follow: Cys12/Cys65, Cys16/Cys41, Cys25/Cys46, and Cys29/Cys48.

It belongs to the long (4 C-C) scorpion toxin superfamily. Sodium channel inhibitor family. Beta subfamily. In terms of tissue distribution, expressed by the venom gland.

It is found in the secreted. Functionally, beta toxins bind voltage-independently at site-4 of sodium channels (Nav) and shift the voltage of activation toward more negative potentials thereby affecting sodium channel activation and promoting spontaneous and repetitive firing. Acts on human sodium channel Nav1.6/SCN8A. In Centruroides huichol (Scorpion), this protein is Beta-toxin Chui3.